The sequence spans 403 residues: F-box/LRR-repeat protein At1g06630 (403 aa).

Positions 11-59 (RDAINWLPDEILGKILSLLATKQAVSTSVLSKKWRTLFKLVDTLEFDDS) constitute an F-box domain. LRR repeat units follow at residues 239–262 (LPNL…NLES) and 288–312 (IRNV…KYGL).

This chain is F-box/LRR-repeat protein At1g06630, found in Arabidopsis thaliana (Mouse-ear cress).